The primary structure comprises 579 residues: V-type ATP synthase alpha chain (579 aa).

227 to 234 serves as a coordination point for ATP; the sequence is GGFGTGKT.

It belongs to the ATPase alpha/beta chains family.

It carries out the reaction ATP + H2O + 4 H(+)(in) = ADP + phosphate + 5 H(+)(out). Produces ATP from ADP in the presence of a proton gradient across the membrane. The V-type alpha chain is a catalytic subunit. The polypeptide is V-type ATP synthase alpha chain (Anaeromyxobacter sp. (strain K)).